Reading from the N-terminus, the 156-residue chain is Arginine repressor (156 aa).

Belongs to the ArgR family.

Its subcellular location is the cytoplasm. It functions in the pathway amino-acid biosynthesis; L-arginine biosynthesis [regulation]. In terms of biological role, regulates arginine biosynthesis genes. In Erwinia tasmaniensis (strain DSM 17950 / CFBP 7177 / CIP 109463 / NCPPB 4357 / Et1/99), this protein is Arginine repressor.